Here is a 405-residue protein sequence, read N- to C-terminus: Macrolide efflux protein A (405 aa).

The next 11 membrane-spanning stretches (helical) occupy residues 14 to 34 (IWAGQAVSLITSAILQMAIIF), 48 to 68 (MASLLGFLPYAVFGPAIGVLV), 76 to 98 (IMIGADLIIAAAGSVLTIVAFYM), 145 to 165 (SLQSISYIVSPAVAALLYSVW), 168 to 188 (NAIIAIDVLGAVIASITVAIV), 222 to 242 (FALLLVGTLYMFVYMPINALF), 259 to 279 (ITEISFASGMLIGGLLLGLFG), 285 to 305 (ILLITASIFMMGISLTISGLL), 310 to 330 (FFIFVVCCAIMGLSVPFYSGV), 350 to 370 (LTGSIMSLAMPIGLILSALFA), and 373 to 393 (IGVNHWFLLSGTLIICIAIVC).

Belongs to the major facilitator superfamily. Drug:H(+) antiporter-3 (DHA3) (TC 2.A.1.21) family.

Its subcellular location is the cell membrane. In terms of biological role, confers resistance to 14-membered macrolides including erythromycin and to 15-membered macrolides but not to 16-membered macrolides, lincosamides or analogs of streptogramin B. May function as an efflux pump to regulate intracellular macrolide levels. This Streptococcus pyogenes serotype M6 (strain ATCC BAA-946 / MGAS10394) protein is Macrolide efflux protein A.